The sequence spans 339 residues: Glycerol-3-phosphate dehydrogenase [NAD(P)+] (339 aa).

Residues Ser15, Tyr16, His36, and Lys110 each contribute to the NADPH site. Lys110, Gly139, and Thr141 together coordinate sn-glycerol 3-phosphate. Residue Ala143 coordinates NADPH. The sn-glycerol 3-phosphate site is built by Lys195, Asp248, Ser258, Arg259, and Asn260. The active-site Proton acceptor is Lys195. Arg259 serves as a coordination point for NADPH. NADPH contacts are provided by Val283 and Glu285.

This sequence belongs to the NAD-dependent glycerol-3-phosphate dehydrogenase family.

It is found in the cytoplasm. The enzyme catalyses sn-glycerol 3-phosphate + NAD(+) = dihydroxyacetone phosphate + NADH + H(+). It catalyses the reaction sn-glycerol 3-phosphate + NADP(+) = dihydroxyacetone phosphate + NADPH + H(+). It functions in the pathway membrane lipid metabolism; glycerophospholipid metabolism. In terms of biological role, catalyzes the reduction of the glycolytic intermediate dihydroxyacetone phosphate (DHAP) to sn-glycerol 3-phosphate (G3P), the key precursor for phospholipid synthesis. This Klebsiella pneumoniae (strain 342) protein is Glycerol-3-phosphate dehydrogenase [NAD(P)+].